The following is a 47-amino-acid chain: Photosystem II reaction center protein K (47 aa).

Residues 1–10 (MAAFSLDLLA) constitute a propeptide that is removed on maturation. The helical transmembrane segment at 19-39 (FGPLIDILPIIPVFFLLLAFV) threads the bilayer.

The protein belongs to the PsbK family. In terms of assembly, PSII is composed of 1 copy each of membrane proteins PsbA, PsbB, PsbC, PsbD, PsbE, PsbF, PsbH, PsbI, PsbJ, PsbK, PsbL, PsbM, PsbT, PsbX, PsbY, PsbZ, Psb30/Ycf12, peripheral proteins PsbO, CyanoQ (PsbQ), PsbU, PsbV and a large number of cofactors. It forms dimeric complexes.

The protein localises to the cellular thylakoid membrane. In terms of biological role, one of the components of the core complex of photosystem II (PSII). PSII is a light-driven water:plastoquinone oxidoreductase that uses light energy to abstract electrons from H(2)O, generating O(2) and a proton gradient subsequently used for ATP formation. It consists of a core antenna complex that captures photons, and an electron transfer chain that converts photonic excitation into a charge separation. The sequence is that of Photosystem II reaction center protein K from Synechococcus sp. (strain WH7803).